We begin with the raw amino-acid sequence, 284 residues long: Cystinosin homolog (284 aa).

The next 7 membrane-spanning stretches (helical) occupy residues 3 to 23 (ALSIISIIIGWIYFACWSLSF), 37 to 57 (IGLSFDFLLFNITGYACYSVF), 86 to 106 (IAFAIHGFVLTAITIIQCFIY), 116 to 136 (LGIGIATLIWVSLIVMTILGF), 139 to 159 (VFTWLWVINYYSYVKLFITFI), 181 to 201 (NVLLDFSGGVLSLLQMFLDVA), and 216 to 236 (LGLSLFSIAFDILFIIQHYIL). Residues 4–70 (LSIISIIIGW…LYFDKLVKNE (67 aa)) enclose the PQ-loop 1 domain. Residues 154–208 (LFITFIKYIPQAYLNFKNKSTSGWSVHNVLLDFSGGVLSLLQMFLDVADSGNWNI) form the PQ-loop 2 domain. The segment at 247–269 (NLNDNNIPNNNNNNNNNINNNTP) is disordered.

The protein belongs to the cystinosin family.

It is found in the lysosome membrane. The enzyme catalyses L-cystine(out) + H(+)(out) = L-cystine(in) + H(+)(in). Cystine/H(+) symporter that mediates export of cystine, the oxidized dimer of cysteine, from lysosomes. This Dictyostelium discoideum (Social amoeba) protein is Cystinosin homolog (ctns).